The sequence spans 357 residues: METVRRKLEHIEICLKKEVVSKYRPFDDLILLHRALPEIDESDVCTECTFLNRRLSAPLIISAMTGGHPDAREINANLATAAQETGIAIGVGSQRAALEHPDLEDTFSVVRELAPDVPVIGNIGAVQLHRYGPEVLDRVAEMVDADAVAVHLNFLQESVQPEGERHAAGVLGSLREARFRLPIIIKETGCGIPFEDARMLVDSGIQLIDVAGTGGTSWSMVESYRAELRGDPESKEIGMLFAEWGIPTPVSVIECSRAGAQVISSGGVRSGIDVARSIALGAFMAGAALPLLAPATRGSVDVVRVLQRFVRELRISMFLTGSRSLQELSRAPVIITGRTREILEQRGIDTKIFSSKR.

Substrate is bound at residue 6-7 (RK). Residues Ser62, 63–65 (AMT), Ser93, and Asn122 each bind FMN. Residue 93–95 (SQR) participates in substrate binding. Gln156 serves as a coordination point for substrate. Glu157 lines the Mg(2+) pocket. FMN contacts are provided by residues Lys186, Thr216, 267 to 269 (GVR), and 288 to 289 (AL).

This sequence belongs to the IPP isomerase type 2 family. As to quaternary structure, homooctamer. Dimer of tetramers. It depends on FMN as a cofactor. NADPH is required as a cofactor. The cofactor is Mg(2+).

It is found in the cytoplasm. It catalyses the reaction isopentenyl diphosphate = dimethylallyl diphosphate. Its function is as follows. Involved in the biosynthesis of isoprenoids. Catalyzes the 1,3-allylic rearrangement of the homoallylic substrate isopentenyl (IPP) to its allylic isomer, dimethylallyl diphosphate (DMAPP). This chain is Isopentenyl-diphosphate delta-isomerase, found in Methanothrix thermoacetophila (strain DSM 6194 / JCM 14653 / NBRC 101360 / PT) (Methanosaeta thermophila).